The primary structure comprises 43 residues: Potassium channel toxin gamma-KTx 4.1 (43 aa).

4 cysteine pairs are disulfide-bonded: cysteine 5/cysteine 23, cysteine 11/cysteine 34, cysteine 20/cysteine 39, and cysteine 24/cysteine 41.

It belongs to the ergtoxin family. Gamma-KTx 4 subfamily. In terms of tissue distribution, expressed by the venom gland.

It localises to the secreted. In terms of biological role, reversibly blocks Kv11/ERG potassium channels. The chain is Potassium channel toxin gamma-KTx 4.1 from Centruroides limpidus (Mexican scorpion).